The chain runs to 632 residues: Phosphomethylpyrimidine synthase (632 aa).

Residues 1–23 are compositionally biased toward polar residues; the sequence is MNIRSNPQQTVPAVTTGPLSSSR. The disordered stretch occupies residues 1–26; the sequence is MNIRSNPQQTVPAVTTGPLSSSRKIF. Substrate-binding positions include asparagine 221, methionine 250, tyrosine 279, histidine 315, 335–337, 376–379, and glutamate 415; these read SRG and DGLR. Residue histidine 419 coordinates Zn(2+). Tyrosine 442 contacts substrate. A Zn(2+)-binding site is contributed by histidine 483. The [4Fe-4S] cluster site is built by cysteine 563, cysteine 566, and cysteine 571.

It belongs to the ThiC family. Homodimer. Requires [4Fe-4S] cluster as cofactor.

The enzyme catalyses 5-amino-1-(5-phospho-beta-D-ribosyl)imidazole + S-adenosyl-L-methionine = 4-amino-2-methyl-5-(phosphooxymethyl)pyrimidine + CO + 5'-deoxyadenosine + formate + L-methionine + 3 H(+). It functions in the pathway cofactor biosynthesis; thiamine diphosphate biosynthesis. In terms of biological role, catalyzes the synthesis of the hydroxymethylpyrimidine phosphate (HMP-P) moiety of thiamine from aminoimidazole ribotide (AIR) in a radical S-adenosyl-L-methionine (SAM)-dependent reaction. This is Phosphomethylpyrimidine synthase from Bradyrhizobium diazoefficiens (strain JCM 10833 / BCRC 13528 / IAM 13628 / NBRC 14792 / USDA 110).